The primary structure comprises 484 residues: Glutamate--tRNA ligase (484 aa).

The 'HIGH' region signature appears at Pro-11 to Asn-21. Residues Lys-252–Arg-256 carry the 'KMSKS' region motif. ATP is bound at residue Lys-255.

This sequence belongs to the class-I aminoacyl-tRNA synthetase family. Glutamate--tRNA ligase type 1 subfamily. In terms of assembly, monomer.

Its subcellular location is the cytoplasm. It carries out the reaction tRNA(Glu) + L-glutamate + ATP = L-glutamyl-tRNA(Glu) + AMP + diphosphate. Catalyzes the attachment of glutamate to tRNA(Glu) in a two-step reaction: glutamate is first activated by ATP to form Glu-AMP and then transferred to the acceptor end of tRNA(Glu). This is Glutamate--tRNA ligase from Staphylococcus aureus (strain MRSA252).